The chain runs to 348 residues: UDP-3-O-acylglucosamine N-acyltransferase (348 aa).

H237 functions as the Proton acceptor in the catalytic mechanism.

It belongs to the transferase hexapeptide repeat family. LpxD subfamily. As to quaternary structure, homotrimer.

It carries out the reaction a UDP-3-O-[(3R)-3-hydroxyacyl]-alpha-D-glucosamine + a (3R)-hydroxyacyl-[ACP] = a UDP-2-N,3-O-bis[(3R)-3-hydroxyacyl]-alpha-D-glucosamine + holo-[ACP] + H(+). The protein operates within bacterial outer membrane biogenesis; LPS lipid A biosynthesis. Functionally, catalyzes the N-acylation of UDP-3-O-acylglucosamine using 3-hydroxyacyl-ACP as the acyl donor. Is involved in the biosynthesis of lipid A, a phosphorylated glycolipid that anchors the lipopolysaccharide to the outer membrane of the cell. This Geotalea daltonii (strain DSM 22248 / JCM 15807 / FRC-32) (Geobacter daltonii) protein is UDP-3-O-acylglucosamine N-acyltransferase.